We begin with the raw amino-acid sequence, 199 residues long: dITP/XTP pyrophosphatase (199 aa).

Residue 12–17 (SGNAGK) coordinates substrate. Aspartate 73 acts as the Proton acceptor in catalysis. Aspartate 73 is a binding site for Mg(2+). Substrate contacts are provided by residues serine 74, 157–160 (FGYD), lysine 180, and 185–186 (HR).

It belongs to the HAM1 NTPase family. As to quaternary structure, homodimer. Mg(2+) is required as a cofactor.

It catalyses the reaction XTP + H2O = XMP + diphosphate + H(+). The enzyme catalyses dITP + H2O = dIMP + diphosphate + H(+). It carries out the reaction ITP + H2O = IMP + diphosphate + H(+). Functionally, pyrophosphatase that catalyzes the hydrolysis of nucleoside triphosphates to their monophosphate derivatives, with a high preference for the non-canonical purine nucleotides XTP (xanthosine triphosphate), dITP (deoxyinosine triphosphate) and ITP. Seems to function as a house-cleaning enzyme that removes non-canonical purine nucleotides from the nucleotide pool, thus preventing their incorporation into DNA/RNA and avoiding chromosomal lesions. The polypeptide is dITP/XTP pyrophosphatase (Neisseria meningitidis serogroup A / serotype 4A (strain DSM 15465 / Z2491)).